Reading from the N-terminus, the 115-residue chain is Protachykinin-1 (115 aa).

An N-terminal signal peptide occupies residues 1 to 19 (MKILVALAVLALVSTQLFA). Residues 20 to 56 (EDIRANDDLNYWSDWSDSDQIKEELPEPFEHLLQRIA) constitute a propeptide that is removed on maturation. Residues Met68 and Met92 each carry the methionine amide modification.

The protein belongs to the tachykinin family. Post-translationally, the substance P form is cleaved at Pro-59 by the prolyl endopeptidase FAP (seprase) activity (in vitro). Substance P is also cleaved and degraded by Angiotensin-converting enzyme (ACE) and neprilysin (MME).

The protein localises to the secreted. Functionally, tachykinins are active peptides which excite neurons, evoke behavioral responses, are potent vasodilators and secretagogues, and contract (directly or indirectly) many smooth muscles. The chain is Protachykinin-1 (TAC1) from Oryctolagus cuniculus (Rabbit).